The chain runs to 88 residues: Exodeoxyribonuclease 7 small subunit (88 aa).

This sequence belongs to the XseB family. In terms of assembly, heterooligomer composed of large and small subunits.

The protein resides in the cytoplasm. The enzyme catalyses Exonucleolytic cleavage in either 5'- to 3'- or 3'- to 5'-direction to yield nucleoside 5'-phosphates.. In terms of biological role, bidirectionally degrades single-stranded DNA into large acid-insoluble oligonucleotides, which are then degraded further into small acid-soluble oligonucleotides. The sequence is that of Exodeoxyribonuclease 7 small subunit from Bordetella petrii (strain ATCC BAA-461 / DSM 12804 / CCUG 43448).